The primary structure comprises 361 residues: Small ribosomal subunit protein mS46 (361 aa).

A mitochondrion-targeting transit peptide spans 1–14; the sequence is MRSSMFRCVSRAHY. A disordered region spans residues 37 to 99; it reads ASSNALKLDK…SDSVRANKQQ (63 aa). A compositionally biased stretch (basic and acidic residues) spans 43–52; it reads KLDKMKEGRM. Residues 59–68 show a composition bias toward low complexity; that stretch reads GNQNRNSMNN. Residues 69-91 are compositionally biased toward basic and acidic residues; the sequence is KESRGREGNQGERNMRLKNRSSD.

The protein belongs to the mitochondrion-specific ribosomal protein mS46 family. In terms of assembly, component of the mitochondrial small ribosomal subunit (mt-SSU). Mature yeast 74S mitochondrial ribosomes consist of a small (37S) and a large (54S) subunit. The 37S small subunit contains a 15S ribosomal RNA (15S mt-rRNA) and 34 different proteins. The 54S large subunit contains a 21S rRNA (21S mt-rRNA) and 46 different proteins.

The protein resides in the mitochondrion. In terms of biological role, component of the mitochondrial ribosome (mitoribosome), a dedicated translation machinery responsible for the synthesis of mitochondrial genome-encoded proteins, including at least some of the essential transmembrane subunits of the mitochondrial respiratory chain. The mitoribosomes are attached to the mitochondrial inner membrane and translation products are cotranslationally integrated into the membrane. This Saccharomyces cerevisiae (strain ATCC 204508 / S288c) (Baker's yeast) protein is Small ribosomal subunit protein mS46 (RSM28).